The chain runs to 347 residues: Histidinol-phosphate aminotransferase (347 aa).

N6-(pyridoxal phosphate)lysine is present on Lys-209.

Belongs to the class-II pyridoxal-phosphate-dependent aminotransferase family. Histidinol-phosphate aminotransferase subfamily. As to quaternary structure, homodimer. It depends on pyridoxal 5'-phosphate as a cofactor.

It catalyses the reaction L-histidinol phosphate + 2-oxoglutarate = 3-(imidazol-4-yl)-2-oxopropyl phosphate + L-glutamate. The protein operates within amino-acid biosynthesis; L-histidine biosynthesis; L-histidine from 5-phospho-alpha-D-ribose 1-diphosphate: step 7/9. The chain is Histidinol-phosphate aminotransferase from Geotalea uraniireducens (strain Rf4) (Geobacter uraniireducens).